The sequence spans 321 residues: Fimbria adhesin protein (321 aa).

The signal sequence occupies residues 1–18 (MKKLTLFIGLMALGTTSA).

It belongs to the fimbrial protein family.

Its subcellular location is the fimbrium. In Klebsiella pneumoniae, this protein is Fimbria adhesin protein (mrkD).